The following is an 89-amino-acid chain: Small ribosomal subunit protein uS15 (89 aa).

The protein belongs to the universal ribosomal protein uS15 family. In terms of assembly, part of the 30S ribosomal subunit. Forms a bridge to the 50S subunit in the 70S ribosome, contacting the 23S rRNA.

One of the primary rRNA binding proteins, it binds directly to 16S rRNA where it helps nucleate assembly of the platform of the 30S subunit by binding and bridging several RNA helices of the 16S rRNA. Its function is as follows. Forms an intersubunit bridge (bridge B4) with the 23S rRNA of the 50S subunit in the ribosome. The sequence is that of Small ribosomal subunit protein uS15 from Pseudomonas fluorescens (strain SBW25).